A 311-amino-acid polypeptide reads, in one-letter code: Malate dehydrogenase (311 aa).

NAD(+)-binding positions include 7–13 and aspartate 34; that span reads GAAGGIG. Residues arginine 81 and arginine 87 each contribute to the substrate site. NAD(+) contacts are provided by residues asparagine 94 and 117–119; that span reads ITN. Substrate is bound by residues asparagine 119 and arginine 153. Histidine 177 functions as the Proton acceptor in the catalytic mechanism. Methionine 227 contacts NAD(+).

This sequence belongs to the LDH/MDH superfamily. MDH type 1 family. As to quaternary structure, homodimer.

The catalysed reaction is (S)-malate + NAD(+) = oxaloacetate + NADH + H(+). Functionally, catalyzes the reversible oxidation of malate to oxaloacetate. In Vibrio parahaemolyticus serotype O3:K6 (strain RIMD 2210633), this protein is Malate dehydrogenase.